Consider the following 140-residue polypeptide: 3-hydroxyacyl-[acyl-carrier-protein] dehydratase FabZ (140 aa).

His-48 is a catalytic residue.

The protein belongs to the thioester dehydratase family. FabZ subfamily.

It localises to the cytoplasm. The enzyme catalyses a (3R)-hydroxyacyl-[ACP] = a (2E)-enoyl-[ACP] + H2O. Its function is as follows. Involved in unsaturated fatty acids biosynthesis. Catalyzes the dehydration of short chain beta-hydroxyacyl-ACPs and long chain saturated and unsaturated beta-hydroxyacyl-ACPs. This chain is 3-hydroxyacyl-[acyl-carrier-protein] dehydratase FabZ, found in Exiguobacterium sibiricum (strain DSM 17290 / CCUG 55495 / CIP 109462 / JCM 13490 / 255-15).